Here is a 150-residue protein sequence, read N- to C-terminus: Putative transmembrane protein DDB_G0277665 (150 aa).

The next 2 helical transmembrane spans lie at 4 to 24 (TLII…FNIL) and 42 to 62 (VIVG…FLPL).

Its subcellular location is the membrane. The sequence is that of Putative transmembrane protein DDB_G0277665 from Dictyostelium discoideum (Social amoeba).